Consider the following 128-residue polypeptide: MADGSKAVIQFLRGVDEPVVPDIRVTRSRDGRTGQAIFVFEQPEALAPEVMEAITGMFMLDEEGMLVTREVNGKFVNGKASALEATYTWKSEQDFERFMRFAQRYADSSGLGYSQDSGEAPASDSSNG.

The tract at residues 109 to 128 is disordered; it reads SGLGYSQDSGEAPASDSSNG. A compositionally biased stretch (polar residues) spans 111 to 128; it reads LGYSQDSGEAPASDSSNG.

Belongs to the Psb28 family. As to quaternary structure, part of the photosystem II complex.

It is found in the cellular thylakoid membrane. The protein is Photosystem II reaction center Psb28 protein of Synechococcus sp. (strain CC9311).